Here is a 277-residue protein sequence, read N- to C-terminus: Mannosyl-3-phosphoglycerate phosphatase (277 aa).

Aspartate 13 functions as the Nucleophile in the catalytic mechanism. Aspartate 13, aspartate 15, and aspartate 219 together coordinate Mg(2+).

The protein belongs to the HAD-like hydrolase superfamily. MPGP family. It depends on Mg(2+) as a cofactor.

The protein localises to the cytoplasm. It catalyses the reaction 2-O-(alpha-D-mannosyl)-3-phosphoglycerate + H2O = (2R)-2-O-(alpha-D-mannosyl)-glycerate + phosphate. The protein operates within carbohydrate biosynthesis; 2-(alpha-D-mannosyl)-D-glycerate biosynthesis; 2-(alpha-D-mannosyl)-D-glycerate from GDP-alpha-D-mannose (MPG route): step 2/2. Hydrolyzes mannosyl-3-phosphoglycerate (MPG) to form the osmolyte mannosylglycerate (MG). The protein is Mannosyl-3-phosphoglycerate phosphatase of Aeropyrum pernix (strain ATCC 700893 / DSM 11879 / JCM 9820 / NBRC 100138 / K1).